Reading from the N-terminus, the 687-residue chain is Carboxysome assembly protein CcmM (687 aa).

The rbcS-like repeat 1, SSUL1 stretch occupies residues 242 to 327 (SINSDITNQI…RVVEVIIQRP (86 aa)). 2 disordered regions span residues 328 to 355 (GDVP…SAVA) and 442 to 476 (VHRP…SSAG). Polar residues predominate over residues 335 to 346 (SRGTTTTKALSS). Positions 366 to 445 (ANQLRALLHQ…RVAEIVVHRP (80 aa)) are rbcS-like repeat 2, SSUL2. The segment covering 451–472 (GKPSSSSSSVGYKSAPVSSAGG) has biased composition (low complexity). The rbcS-like repeat 3, SSUL3 stretch occupies residues 480–562 (PEVIATVRGL…RVLEQIIQRP (83 aa)). A disordered region spans residues 565–590 (NVVAGRSPSSSSASTSSSASSNGFGS). The span at 568–587 (AGRSPSSSSASTSSSASSNG) shows a compositional bias: low complexity. Residues 599–687 (SAVRLDNSVV…RVLETIIQRP (89 aa)) form a rbcS-like repeat 4, SSUL4 region.

This sequence belongs to the gamma-class carbonic anhydrase family. As to quaternary structure, probably forms homotrimers. Full length CcmM interacts with CcaA, CcmK1, CcmK2, CcmK4, CcmL, CcmN and itself, while the N-terminus of CcmM (first 249 residues) only interacts with CcaA, CcmM and CcmN. A probable CcmM-CcaA-CcmN complex as well as a CcaA-RuBisCO-CcmM complex can also be isolated. Interacts with full-length CcaA and the first 220 residues of CcaA; surface residues Gln-177 to Gln-188 are responsible in part for binding. In terms of processing, multiple forms of the protein of 73 (full length), 62, 52 (the most predominant form) and 36 kDa are seen even in the presence of protease inhibitors. CcmM52 interacts with CcaA.

It is found in the carboxysome. Functions as a scaffold protein for the assembly of beta-carboxysomes, initiates carboxysome assembly via its N-terminal domain binding to CcaA, CcmK and CcmL. Binds HCO(3)-, suggesting it may play a role in the activity or regulation of bicarbonate dehydration. Also initiates carboxysome assembly by coalescing RuBisCO (ribulose bisphosphate carboxylase, rbcL-rbcS) via its SSU-like domains. Produced as a full-length and a shorter form; both forms are required for correct carboxysome assembly and growth. Despite its strong similarity to gamma-class carbonic anhydrase (CA) it does not have detectable CA activity. Its function is as follows. Beta-carboxysome assembly initiates when soluble RuBisCO is condensed into a liquid matrix in a pre-carboxysome by the RbcS-like domains of probably both forms of CcmM. CcmN interacts with the N-terminus of full length CcmM, and then recruits the shell proteins (CcmK) via CcmN's encapsulation peptide. CcmM73 also interacts with CcmK proteins and CcmL directly. Shell formation requires CcmK proteins and CcmO. CcmL caps the otherwise elongated carboxysome. Once fully encapsulated carboxysomes are formed, they migrate within the cell probably via interactions with the cytoskeleton. This chain is Carboxysome assembly protein CcmM, found in Synechocystis sp. (strain ATCC 27184 / PCC 6803 / Kazusa).